The primary structure comprises 574 residues: MRATRFPLATLKETPADAEVISHQLMLRAGMIRRLASGLYSWTPLGLRVLRKVEGLVRDEMDRAGALELLMPAVQPAELWQESGRWEQYGPELLRLKDRHMREFCFGPTHEEVITDYVRREVKSYRQLPVNYYQIQTKFRDEIRPRFGVMRAREFLMKDAYSFHVDEDSLKETYARMHEAYTRIFTRCGLDFRAVLADTGSIGGNASHEFHVLADSGEDAIAFSDVSDYAANVELAEAVAPATERAAPGEAMRLVDTPNARTIADLVEQHGLAIEKTVKTLVVAAAEGAEAPLIALLVRGDHELNAIKAEKLPQVASPLRMATEEEIRAAIGAGPGSLGPVNLPIPCVVDRAVALMSDFGAGANIDGKHYFGINWERDLALPPVADLRNVVAGDPSPDGQGSLQIRRGIEVGHIFQLGRKYSEAMGATVLDEQGRSLVVTMGCYGIGVSRVVAAAIEQNHDAQGIIWPEALAPFTVALCPINAQKSQRLREAADALYERLLNAGFEVFYDDRGLRPGAMFADMELIGIPHRLVLGERGLDAGEIEYKGRRDTDTTQVALDGVLDFLRQRMNAAH.

This sequence belongs to the class-II aminoacyl-tRNA synthetase family. ProS type 1 subfamily. As to quaternary structure, homodimer.

It localises to the cytoplasm. The catalysed reaction is tRNA(Pro) + L-proline + ATP = L-prolyl-tRNA(Pro) + AMP + diphosphate. Catalyzes the attachment of proline to tRNA(Pro) in a two-step reaction: proline is first activated by ATP to form Pro-AMP and then transferred to the acceptor end of tRNA(Pro). As ProRS can inadvertently accommodate and process non-cognate amino acids such as alanine and cysteine, to avoid such errors it has two additional distinct editing activities against alanine. One activity is designated as 'pretransfer' editing and involves the tRNA(Pro)-independent hydrolysis of activated Ala-AMP. The other activity is designated 'posttransfer' editing and involves deacylation of mischarged Ala-tRNA(Pro). The misacylated Cys-tRNA(Pro) is not edited by ProRS. The chain is Proline--tRNA ligase from Thioalkalivibrio sulfidiphilus (strain HL-EbGR7).